The chain runs to 577 residues: Glycine--tRNA ligase (577 aa).

Arginine 98 and glutamate 164 together coordinate substrate. ATP contacts are provided by residues 196–198, 206–211, 328–329, and 451–454; these read RNE, IRLREF, EC, and GIDR. Residue 211-215 coordinates substrate; sequence FTQAE. 447-451 lines the substrate pocket; it reads EPSYG.

The protein belongs to the class-II aminoacyl-tRNA synthetase family.

The protein resides in the cytoplasm. It carries out the reaction tRNA(Gly) + glycine + ATP = glycyl-tRNA(Gly) + AMP + diphosphate. Functionally, catalyzes the attachment of glycine to tRNA(Gly). The polypeptide is Glycine--tRNA ligase (Methanocaldococcus jannaschii (strain ATCC 43067 / DSM 2661 / JAL-1 / JCM 10045 / NBRC 100440) (Methanococcus jannaschii)).